The following is an 862-amino-acid chain: Active breakpoint cluster region-related protein (862 aa).

Positions 30-84 are disordered; it reads DAEGNEEHKSSREGSETMPYIDESPTMSPQLSARSQDSVDGVSPTPTEVLLPGGE. Positions 34-44 are enriched in basic and acidic residues; that stretch reads NEEHKSSREGS. Residues 54 to 67 are compositionally biased toward polar residues; sequence PTMSPQLSARSQDS. The DH domain occupies 93 to 286; the sequence is MRKLVLSGVL…QNFLSSINED (194 aa). A PH domain is found at 303 to 462; it reads QLVKDGFLVE…WREAIQKLQK (160 aa). A C2 domain is found at 488-616; that stretch reads VHNVPIISHK…QSKNWHDDVI (129 aa). The region spanning 650-848 is the Rho-GAP domain; that stretch reads VKISVVTKRE…YYLQHPPISF (199 aa).

Its subcellular location is the cell projection. It localises to the dendritic spine. The protein localises to the axon. The protein resides in the synapse. Protein with a unique structure having two opposing regulatory activities toward small GTP-binding proteins. The C-terminus is a GTPase-activating protein domain which stimulates GTP hydrolysis by RAC1, RAC2 and CDC42. Accelerates the intrinsic rate of GTP hydrolysis of RAC1 or CDC42, leading to down-regulation of the active GTP-bound form. The central Dbl homology (DH) domain functions as guanine nucleotide exchange factor (GEF) that modulates the GTPases CDC42, RHOA and RAC1. Promotes the conversion of CDC42, RHOA and RAC1 from the GDP-bound to the GTP-bound form. The chain is Active breakpoint cluster region-related protein (abr) from Xenopus tropicalis (Western clawed frog).